Here is a 67-residue protein sequence, read N- to C-terminus: Conotoxin TsMMSK-011 (67 aa).

The N-terminal stretch at 1 to 20 (MMSKLGVLLTICLLLFPLTA) is a signal peptide. The propeptide occupies 21–50 (VQLDGDQPADLPALRTQDIATDHSPWFDPV). 3 cysteine pairs are disulfide-bonded: Cys53-Cys65, Cys54-Cys61, and Cys58-Cys64. Residue Pro63 is modified to 4-hydroxyproline.

Belongs to the conotoxin M superfamily. Expressed by the venom duct.

The protein localises to the secreted. The chain is Conotoxin TsMMSK-011 from Conus tessulatus (Tessellate cone).